The primary structure comprises 532 residues: Cyclin-L1 (532 aa).

Cyclin-like stretches follow at residues 94 to 196 (ELIQ…RVLK) and 209 to 293 (KIIV…ETLR). Residue Thr-331 is modified to Phosphothreonine. The disordered stretch occupies residues 332–532 (PALSTLGGFS…SRSGHGRHRR (201 aa)). A phosphoserine mark is found at Ser-341 and Ser-344. Residues Lys-345 and Lys-353 each participate in a glycyl lysine isopeptide (Lys-Gly) (interchain with G-Cter in SUMO2) cross-link. Residues 348 to 358 (SPREVKAEEKS) show a composition bias toward basic and acidic residues. Phosphoserine is present on residues Ser-358 and Ser-361. Residues 367 to 376 (VKKEPEDRQQ) show a composition bias toward basic and acidic residues. A Glycyl lysine isopeptide (Lys-Gly) (interchain with G-Cter in SUMO2) cross-link involves residue Lys-368. The residue at position 380 (Ser-380) is a Phosphoserine. Composition is skewed to basic residues over residues 388–424 (DSKR…RRSR), 444–458 (RRHH…KAKH), 466–482 (SNRH…RSQS), and 492–504 (KKHR…HRDR). An RS region spans residues 396-438 (RSASRSRSRTRSRSRSHSPRRHYNNRRSRSGTYSSRSRSRSRS). The residue at position 451 (Ser-451) is a Phosphoserine. The segment covering 505–514 (RERSRSFERS) has biased composition (basic and acidic residues). The segment covering 515–532 (HKGKHHGGSRSGHGRHRR) has biased composition (basic residues).

The protein belongs to the cyclin family. Cyclin L subfamily. As to quaternary structure, interacts with POLR2A via its hyperphosphorylated C-terminal domain (CTD). Interacts with CDK11A, CDK11B, CDK12 and CDK13. May form a ternary complex with CDK11B and casein kinase II (CKII). Interacts with pre-mRNA-splicing factors, including at least SRSF1, SRSF2 and SRSF7/SLU7. In terms of tissue distribution, widely expressed (at protein level).

It localises to the nucleus speckle. It is found in the nucleus. Its subcellular location is the nucleoplasm. The protein localises to the cytoplasm. Involved in pre-mRNA splicing. Functions in association with cyclin-dependent kinases (CDKs). May play a role in the regulation of RNA polymerase II (pol II). Inhibited by the CDK-specific inhibitor CDKN1A/p21. The chain is Cyclin-L1 (Ccnl1) from Mus musculus (Mouse).